The sequence spans 81 residues: MESPKKKNQQLKVGILHLGSRQKKIRIQLRSQCATWKVICKSCISQTPGINLDLGSGVKVKIIPKEEHCKMPEAGEEQPQV.

Residue Lys12 forms a Glycyl lysine isopeptide (Lys-Gly) (interchain with G-Cter in SUMO2) linkage. Ser20 carries the post-translational modification Phosphoserine. Glycyl lysine isopeptide (Lys-Gly) (interchain with G-Cter in SUMO2) cross-links involve residues Lys61 and Lys65.

The protein belongs to the GAGE family. In normal tissues, highly expressed in testis. Expressed also in many different types of cancers: highly expressed in breast cancer, prostate cancer and many types of lung cancers, including squamous cell carcinoma, small cell carcinoma, non-small cell carcinoma, and adenocarcinoma, as well as in Ewing's cell lines, in some Ewing's sarcoma patient samples, and in one of one alveolar rhabdomyosarcoma patient sample.

In Homo sapiens (Human), this protein is X antigen family member 1.